The chain runs to 149 residues: Large ribosomal subunit protein bL9 (149 aa).

It belongs to the bacterial ribosomal protein bL9 family.

Binds to the 23S rRNA. This Acidothermus cellulolyticus (strain ATCC 43068 / DSM 8971 / 11B) protein is Large ribosomal subunit protein bL9.